Reading from the N-terminus, the 469-residue chain is Mitochondrial adenyl nucleotide antiporter SLC25A25 (469 aa).

The interval 1 to 165 is regulatory N-terminal domain; sequence MLCLCLYVPV…LYWKHSTIFD (165 aa). The Mitochondrial intermembrane segment spans residues 1 to 189; it reads MLCLCLYVPV…ERQTGMWWRH (189 aa). EF-hand domains are found at residues 47 to 80, 78 to 113, and 114 to 149; these read TYRQWKQKIVQAGDKDLDGQLDFEEFVHYLQDHE, DHEKKLRLVFKSLDKKNDGRIDAQEIMQSLRDLGVK, and ISEQQAEKILKSMDKNGTMTIDWNEWRDYHLLHPVE. Ca(2+) is bound by residues D60, D62, D64, Q66, and E71. The linker region stretch occupies residues 151–160; the sequence is IPEIILYWKH. The interval 166–469 is C-terminal transmembrane transporter domain; that stretch reads VGENLTVPDE…LKITLGVQSR (304 aa). Solcar repeat units follow at residues 184 to 270, 278 to 363, and 375 to 463; these read GMWW…IKRL, LRIH…LKNA, and PGVF…LKIT. The helical transmembrane segment at 190–207 threads the bilayer; it reads LVAGGGAGAVSRTCTAPL. Over 208–244 the chain is Mitochondrial matrix; the sequence is DRLKVLMQVHASRSNNMGIVGGFTQMIREGGARSLWR. A helical membrane pass occupies residues 245–264; the sequence is GNGINVLKIAPESAIKFMAY. At 265–287 the chain is on the mitochondrial intermembrane side; that stretch reads EQIKRLVGSDQETLRIHERLVAG. The chain crosses the membrane as a helical span at residues 288–301; the sequence is SLAGAIAQSSIYPM. Topologically, residues 302 to 337 are mitochondrial matrix; it reads EVLKTRMALRKTGQYSGMLDCARRILAREGVAAFYK. The chain crosses the membrane as a helical span at residues 338–357; that stretch reads GYVPNMLGIIPYAGIDLAVY. The Mitochondrial intermembrane portion of the chain corresponds to 358 to 380; sequence ETLKNAWLQHYAVNSADPGVFVL. The chain crosses the membrane as a helical span at residues 381 to 398; it reads LACGTMSSTCGQLASYPL. At 399-437 the chain is on the mitochondrial matrix side; that stretch reads ALVRTRMQAQASIEGAPEVTMSSLFKHILRTEGAFGLYR. Residues 438 to 457 traverse the membrane as a helical segment; that stretch reads GLAPNFMKVIPAVSISYVVY. The Mitochondrial intermembrane portion of the chain corresponds to 458 to 469; it reads ENLKITLGVQSR.

This sequence belongs to the mitochondrial carrier (TC 2.A.29) family. In terms of tissue distribution, widely expressed. Expressed in fetal and adult liver, skeletal muscle, testis, ovary, hippocampus and caudate nucleus. Expressed in all tissues tested. As to expression, expression is restricted to kidney and lung.

It is found in the mitochondrion inner membrane. It catalyses the reaction Mg(2+)(out) + phosphate(in) + ATP(out) = Mg(2+)(in) + phosphate(out) + ATP(in). Activated by an increase in cytosolic calcium levels that induce a conformational change of the N-terminal regulatory domain, uncapping the channel and allowing transport. Its function is as follows. Electroneutral antiporter that most probably mediates the transport of adenyl nucleotides through the inner mitochondrial membrane. Originally identified as an ATP-magnesium/inorganic phosphate antiporter, it could have a broader specificity for adenyl nucleotides. By regulating the mitochondrial matrix adenyl nucleotide pool could adapt to changing cellular energetic demands and indirectly regulate adenyl nucleotide-dependent metabolic pathways. In Homo sapiens (Human), this protein is Mitochondrial adenyl nucleotide antiporter SLC25A25.